The sequence spans 1603 residues: Gag-Pol polyprotein (1603 aa).

Residues 128 to 141 are compositionally biased toward basic and acidic residues; that stretch reads VGETTVQRDAKMAP. A disordered region spans residues 128 to 150; that stretch reads VGETTVQRDAKMAPEETATPKTV. Residues 172-175 carry the PPXY motif motif; it reads PPPY. The short motif at 180–184 is the LYPX(n)L motif element; it reads LYPSL. Residues 181–215 are disordered; that stretch reads YPSLAGVGEQQGQGGDTPRGAEQPRAEPGHAGLAP. The Nuclear export signal motif lies at 219–229; that stretch reads LTDWARIREEL. 2 CCHC-type zinc fingers span residues 507-524 and 533-550; these read RLCY…QCPK and ERCQ…QCRR. A disordered region spans residues 544–571; the sequence is NAKQCRRRDSNQGQRPGRGLSSGPWPVS. The Peptidase A2 domain occupies 609–690; it reads ITALLDSGAD…VRGSILGRDC (82 aa). The For protease activity; shared with dimeric partner role is filled by Asp-614. One can recognise a Reverse transcriptase domain in the interval 750-938; that stretch reads LQLGHIEPSL…PGVQYLGYKL (189 aa). Residues Asp-815, Asp-890, Asp-891, Asp-1158, Glu-1192, Asp-1213, and Asp-1272 each coordinate Mg(2+). Positions 1149–1280 constitute an RNase H type-1 domain; the sequence is PVPGPTVFTD…ADSQATFQAY (132 aa). Residues 1280–1321 form an Integrase-type zinc finger; it reads YPLREAKDLHTTLHIGPRALSKACNISMQQAREVVQTCPHCN. Zn(2+)-binding residues include His-1289, His-1293, Cys-1317, and Cys-1320. The 164-residue stretch at 1333–1496 folds into the Integrase catalytic domain; sequence RGLGPLQIWQ…TPVQKHWRPT (164 aa). Residues Asp-1344, Asp-1401, and Glu-1437 each contribute to the Mg(2+) site. A DNA-binding region (integrase-type) is located at residues 1502–1550; sequence PPVKIRIETGEWEKGWNVLVWGRGYAAVKNRDTDKVIWVPSRKVKPDIT. An involved in homooctamerization region spans residues 1548-1567; sequence DITQKDEVTKKDEASPLFAG. Over residues 1549–1561 the composition is skewed to basic and acidic residues; it reads ITQKDEVTKKDEA. The interval 1549-1603 is disordered; the sequence is ITQKDEVTKKDEASPLFAGSSDWIPWGDEQEGLQEEAASNKQEGPGEDTLAANES.

Active as a homodimer. As to quaternary structure, homodimer. Homomultimer. Homohexamer. In terms of assembly, homodimer; further associates as a homooctamer. Heterodimer of alpha and beta subunits. Three forms of RT exist: alpha-alpha (alpha-Pol), beta-beta (beta-Pol), and alpha-beta, with the major form being the heterodimer. Both the polymerase and RNase H active sites are located in the alpha subunit of heterodimeric RT alpha-beta. Mg(2+) is required as a cofactor. Requires Mn(2+) as cofactor. In terms of processing, specific enzymatic cleavages in vivo yield mature proteins. Post-translationally, capsid protein p27: The cleavage at the C-terminus is slowly trimmed by the viral protease, sometimes being cut internally thereby generating the short version of the capsid protein and a capsid protein C-terminally extended by 3 amino acids in a ratio of 2:1.

The protein resides in the virion. The catalysed reaction is DNA(n) + a 2'-deoxyribonucleoside 5'-triphosphate = DNA(n+1) + diphosphate. It catalyses the reaction Endonucleolytic cleavage to 5'-phosphomonoester.. In terms of biological role, capsid protein p27: Self-associates to form the irregular polyhedron core composed of hexamers and pentamers, that encapsulates the genomic RNA-nucleocapsid complex. Assembles as a tube in vitro. Binds to inositol hexakisphosphate (IP6), which allows the assembly of the polyhedral capsid. Functionally, plays a role in the oligomerization of the Gag polyprotein and in the stabilization of the immature particle. Essential layering element during tube assembly. Allows the cooperative binging of Gag to the host plasma membrane. Its function is as follows. Binds strongly to viral nucleic acids and promotes their packaging. Plays a role in the maturation-stabilization of the viral dimeric RNA via highly structured zinc-binding motifs. The aspartyl protease mediates proteolytic cleavages of Gag and Gag-Pol polyproteins during or shortly after the release of the virion from the plasma membrane. Cleavages take place as an ordered, step-wise cascade to yield mature proteins. This process is called maturation. Displays maximal activity during the budding process just prior to particle release from the cell. In terms of biological role, catalyzes viral DNA integration into the host chromosome, by performing a series of DNA cutting and joining reactions. This recombination event is an essential step in the viral replication cycle. Has a strong preference for using the 3'-OH at the viral DNA end as a nucleophile. This is Gag-Pol polyprotein (gag-pol) from Rous sarcoma virus subgroup B (strain Schmidt-Ruppin) (RSV-SR-B).